The following is a 360-amino-acid chain: Olfactory receptor 1L1 (360 aa).

Over 1–75 the chain is Extracellular; the sequence is MERNHNPDNC…GLSSRPEDQK (75 aa). N-linked (GlcNAc...) asparagine glycosylation occurs at N55. The chain crosses the membrane as a helical span at residues 76 to 99; sequence PLFAVFLPIYLITVIGNLLIILAI. Residues 100–107 are Cytoplasmic-facing; it reads RSDTRLQT. A helical transmembrane segment spans residues 108 to 129; the sequence is PMYFFLSILSFVDICYVTVIIP. Residues 130–150 are Extracellular-facing; sequence KMLVNFLSETKTISYSECLTQ. Cysteines 147 and 239 form a disulfide. A helical membrane pass occupies residues 151–170; that stretch reads MYFFLAFGNTDSYLLAAMAI. Residues 171–189 are Cytoplasmic-facing; that stretch reads DRYVAICNPFHYITIMSHR. A helical membrane pass occupies residues 190–208; the sequence is CCVLLLVLSFCIPHFHSLL. Topologically, residues 209-246 are extracellular; that stretch reads HILLTNQLIFCASNVIHHFFCDDQPVLKLSCSSHFVKE. Residues 247 to 269 traverse the membrane as a helical segment; it reads ITVMTEGLAVIMTPFSCIIISYL. Topologically, residues 270–286 are cytoplasmic; sequence RILITVLKIPSAAGKRK. A helical transmembrane segment spans residues 287 to 309; that stretch reads AFSTCGSHLTVVTLFYGSISYLY. Topologically, residues 310 to 321 are extracellular; the sequence is FQPLSNYTVKDQ. N-linked (GlcNAc...) asparagine glycosylation occurs at N315. The helical transmembrane segment at 322–341 threads the bilayer; sequence IATIIYTVLTPMLNPFIYSL. Topologically, residues 342 to 360 are cytoplasmic; it reads RNKDMKQGLAKLMHRMKCQ.

Belongs to the G-protein coupled receptor 1 family.

The protein resides in the cell membrane. Functionally, odorant receptor. The sequence is that of Olfactory receptor 1L1 (OR1L1) from Homo sapiens (Human).